The sequence spans 133 residues: Inhibitor of g-type lysozyme (133 aa).

The first 22 residues, Met-1–Ala-22, serve as a signal peptide directing secretion.

The protein resides in the periplasm. Functionally, inhibits activity of g-type lysozyme, which confers increased lysozyme tolerance to the bacterium. This is Inhibitor of g-type lysozyme (pliG) from Escherichia coli (strain K12).